The sequence spans 151 residues: UPF0208 membrane protein YPDSF_1972 (151 aa).

2 helical membrane passes run 46-66 (FGIR…IALG) and 69-89 (LGPA…GLWW).

The protein belongs to the UPF0208 family.

It localises to the cell inner membrane. The protein is UPF0208 membrane protein YPDSF_1972 of Yersinia pestis (strain Pestoides F).